The primary structure comprises 229 residues: Ribosomal RNA small subunit methyltransferase G (229 aa).

S-adenosyl-L-methionine contacts are provided by residues Gly87, Leu92, 138–139, and Arg154; that span reads VE.

This sequence belongs to the methyltransferase superfamily. RNA methyltransferase RsmG family.

Its subcellular location is the cytoplasm. It catalyses the reaction guanosine(527) in 16S rRNA + S-adenosyl-L-methionine = N(7)-methylguanosine(527) in 16S rRNA + S-adenosyl-L-homocysteine. Its function is as follows. Specifically methylates the N7 position of guanine in position 527 of 16S rRNA. The sequence is that of Ribosomal RNA small subunit methyltransferase G from Oleidesulfovibrio alaskensis (strain ATCC BAA-1058 / DSM 17464 / G20) (Desulfovibrio alaskensis).